We begin with the raw amino-acid sequence, 206 residues long: Probable N-acetyltransferase 14 (206 aa).

Residues 6–206 (LSVREMREDE…MLVREFSKDL (201 aa)) form the N-acetyltransferase domain. The chain crosses the membrane as a helical span at residues 57–77 (FILASFALALLLPVFLAVAAV).

This sequence belongs to the camello family.

The protein localises to the membrane. Functionally, probable acetyltransferase that binds the 5'-GGACTACAG-3' sequence of coproporphyrinogen oxidase promoter. Able to activate transcription of a reporter construct in vitro. Probable acetyltransferase. Its function is as follows. May act as a transcription factor regulating the expression of coproporphyrinogen oxidase by binding to a promoter regulatory element. The polypeptide is Probable N-acetyltransferase 14 (Nat14) (Mus musculus (Mouse)).